A 1093-amino-acid polypeptide reads, in one-letter code: Fused isobutyryl-CoA mutase (1093 aa).

The segment at 1-20 is disordered; it reads MTDLSDVSRTAAAKPPAVPG. The region spanning 26 to 156 is the B12-binding domain; it reads KVRFVTAASL…AGMITDMAQR (131 aa). Residue His-39 coordinates adenosylcob(III)alamin. The segment at 169-417 is GTPase chaperone MeaI; sequence LDTVVAGDRR…YQGLVGALGA (249 aa). A GTP-binding site is contributed by 219–224; that stretch reads GAGKSS. Mg(2+) contacts are provided by Ser-223, Ile-248, Asp-249, and Asp-262. Arg-265 is a GTP binding site. Mg(2+) contacts are provided by Glu-310 and Thr-311. 357–360 lines the GTP pocket; that stretch reads NKFD. Residues 418-579 form a linker region; it reads RGMSLKPGTL…MRENVPGSFP (162 aa). 7 residues coordinate substrate: Phe-587, Arg-622, Arg-728, Tyr-772, Ser-821, Arg-856, and Lys-861. GTP-binding residues include Glu-973 and Asn-1092.

It belongs to the IcmF family. In terms of assembly, homodimer. Adenosylcob(III)alamin serves as cofactor. Mg(2+) is required as a cofactor.

It carries out the reaction 2-methylpropanoyl-CoA = butanoyl-CoA. The catalysed reaction is 3-methylbutanoyl-CoA = 2,2-dimethylpropanoyl-CoA. The enzyme catalyses GTP + H2O = GDP + phosphate + H(+). Its activity is regulated as follows. Is prone to inactivation during catalytic turnover due to the occasional loss of the 5'-deoxyadenosine moiety and formation of the inactive cob(II)alamin cofactor in its active site. The GTPase activity of IcmF powers the ejection of the inactive cofactor and requires the presence of an acceptor protein, adenosyltransferase (ATR), for receiving it. ATR, in turn, catalyzes an adenosylation reaction converting cob(II)alamin in the presence of ATP and a reductant to the active AdoCbl cofactor. The repaired cofactor is then reloaded onto IcmF in a GTPase-gated step, regenerating active enzyme. The GTPase activity of IcmF is significantly decreased in the presence of excess of AdoCbl or cob(II)alamin and is higher in the apoenzyme state, indicating that the G-domain senses the presence and identity of the cofactor in the mutase active site. Catalyzes the reversible interconversion of isobutyryl-CoA and n-butyryl-CoA, and to a much lesser extent, of pivalyl-CoA and isovaleryl-CoA, using radical chemistry. Also exhibits GTPase activity, associated with its G-protein domain (MeaI) that functions as a chaperone that assists cofactor delivery and proper holo-enzyme assembly. The G-domain of IcmF also has a role in its cofactor repair. Does not display ATPase activity. In Cupriavidus metallidurans (strain ATCC 43123 / DSM 2839 / NBRC 102507 / CH34) (Ralstonia metallidurans), this protein is Fused isobutyryl-CoA mutase.